The sequence spans 691 residues: Elongation factor G (691 aa).

The 276-residue stretch at 8-283 folds into the tr-type G domain; sequence EDYRNFGIMA…AVVDFLPNPT (276 aa). GTP contacts are provided by residues 17-24, 81-85, and 135-138; these read AHIDAGKT, DTPGH, and NKMD.

The protein belongs to the TRAFAC class translation factor GTPase superfamily. Classic translation factor GTPase family. EF-G/EF-2 subfamily.

The protein localises to the cytoplasm. In terms of biological role, catalyzes the GTP-dependent ribosomal translocation step during translation elongation. During this step, the ribosome changes from the pre-translocational (PRE) to the post-translocational (POST) state as the newly formed A-site-bound peptidyl-tRNA and P-site-bound deacylated tRNA move to the P and E sites, respectively. Catalyzes the coordinated movement of the two tRNA molecules, the mRNA and conformational changes in the ribosome. This is Elongation factor G from Maricaulis maris (strain MCS10) (Caulobacter maris).